Here is a 139-residue protein sequence, read N- to C-terminus: UPF0225 protein Bpro_4182 (139 aa).

This sequence belongs to the UPF0225 family.

In Polaromonas sp. (strain JS666 / ATCC BAA-500), this protein is UPF0225 protein Bpro_4182.